The following is an 84-amino-acid chain: Large ribosomal subunit protein bL27c (84 aa).

The tract at residues 1–23 (MAHKKGAGSTKNGRDSNAKRLGV) is disordered.

The protein belongs to the bacterial ribosomal protein bL27 family.

The protein resides in the plastid. It is found in the chloroplast. This is Large ribosomal subunit protein bL27c from Thalassiosira pseudonana (Marine diatom).